The primary structure comprises 158 residues: Cyclic pyranopterin monophosphate synthase (158 aa).

Residues Leu75 to His77 and Met113 to Glu114 each bind substrate. Asp128 is an active-site residue.

It belongs to the MoaC family. Homohexamer; trimer of dimers.

The catalysed reaction is (8S)-3',8-cyclo-7,8-dihydroguanosine 5'-triphosphate = cyclic pyranopterin phosphate + diphosphate. It functions in the pathway cofactor biosynthesis; molybdopterin biosynthesis. Its function is as follows. Catalyzes the conversion of (8S)-3',8-cyclo-7,8-dihydroguanosine 5'-triphosphate to cyclic pyranopterin monophosphate (cPMP). This chain is Cyclic pyranopterin monophosphate synthase, found in Actinobacillus succinogenes (strain ATCC 55618 / DSM 22257 / CCUG 43843 / 130Z).